The primary structure comprises 1050 residues: DNA ligase 4 (1050 aa).

A disordered region spans residues 1-22; sequence MNTNRRSRSPDEEALEEDQHQY. ATP-binding residues include E329, K331, L332, R336, E398, F438, E498, K503, K520, and K522. K331 functions as the N6-AMP-lysine intermediate in the catalytic mechanism. E398 contacts Mg(2+). Position 498 (E498) interacts with Mg(2+). Residues 691–702 are compositionally biased toward basic and acidic residues; the sequence is QEQERKKMEMEN. The segment at 691–711 is disordered; sequence QEQERKKMEMENRKRKPATKR. 2 BRCT domains span residues 742–840 and 936–1049; these read ASKR…KENK and LRSF…EYVA.

Belongs to the ATP-dependent DNA ligase family. The cofactor is Mg(2+).

It is found in the nucleus. The catalysed reaction is ATP + (deoxyribonucleotide)n-3'-hydroxyl + 5'-phospho-(deoxyribonucleotide)m = (deoxyribonucleotide)n+m + AMP + diphosphate.. DNA ligase involved in DNA non-homologous end joining (NHEJ); required for double-strand break (DSB) repair. This chain is DNA ligase 4 (mus-53), found in Neurospora crassa (strain ATCC 24698 / 74-OR23-1A / CBS 708.71 / DSM 1257 / FGSC 987).